The chain runs to 61 residues: MAKTSMIIKAQRGSKFKVREYNRCPLCGRPRAYYRKFDMCRICLRKLASTGQIPGVIKSSW.

The Zn(2+) site is built by Cys-24, Cys-27, Cys-40, and Cys-43.

The protein belongs to the universal ribosomal protein uS14 family. Zinc-binding uS14 subfamily. Part of the 30S ribosomal subunit. Contacts proteins S3 and S10. Zn(2+) serves as cofactor.

Functionally, binds 16S rRNA, required for the assembly of 30S particles and may also be responsible for determining the conformation of the 16S rRNA at the A site. This Geobacter metallireducens (strain ATCC 53774 / DSM 7210 / GS-15) protein is Small ribosomal subunit protein uS14.